The primary structure comprises 447 residues: Tubulin beta chain (447 aa).

Residues glutamine 11, glutamate 69, serine 138, glycine 142, threonine 143, glycine 144, asparagine 204, and asparagine 226 each coordinate GTP. Glutamate 69 contributes to the Mg(2+) binding site. The segment at 419–447 is disordered; the sequence is VSEYQQYQDATADEEGEYEDEDQEAEDDM. The span at 429–447 shows a compositional bias: acidic residues; that stretch reads TADEEGEYEDEDQEAEDDM.

The protein belongs to the tubulin family. Dimer of alpha and beta chains. A typical microtubule is a hollow water-filled tube with an outer diameter of 25 nm and an inner diameter of 15 nM. Alpha-beta heterodimers associate head-to-tail to form protofilaments running lengthwise along the microtubule wall with the beta-tubulin subunit facing the microtubule plus end conferring a structural polarity. Microtubules usually have 13 protofilaments but different protofilament numbers can be found in some organisms and specialized cells. Mg(2+) serves as cofactor.

Its subcellular location is the cytoplasm. It localises to the cytoskeleton. Its function is as follows. Tubulin is the major constituent of microtubules, a cylinder consisting of laterally associated linear protofilaments composed of alpha- and beta-tubulin heterodimers. Microtubules grow by the addition of GTP-tubulin dimers to the microtubule end, where a stabilizing cap forms. Below the cap, tubulin dimers are in GDP-bound state, owing to GTPase activity of alpha-tubulin. The chain is Tubulin beta chain (TUBB) from Hordeum vulgare (Barley).